The following is a 443-amino-acid chain: MLSGDEFARRAVAALKPRRIAVLSVHTSPLAQPGTGDAGGMNVYVLQTALQLARRGVAVDIFTRATSSSDEPVVSVTDGVTVRNIVAGPFEGLDKYDLPTQLCAFTAGVLRAEAVHEPGYYNLVHSHYWLSGQAGWLARDRWGVPLVHTAHTLAAVKNQTLAEGDRPEPALRGVGEQQVVDEADRLIVNTKDEADQLVSIHNADPARIDIVHPGVDLDVFTPGDKAAARAEFGLRADEQVVAFVGRIQPLKAPDLLVRAAERLPGVRVLIVGGPSGSGLDEPTALQDLAVDLGIADRVTFLPPQTRERLAQVYRAADIVAVPSYSESFGLVAIEAQACGTPVVAAAVGGLPVAVADQRTGLLVPTHRTEDWADAIGELLVRKGAGFSRAAVEHAAGFSWSSTADSLLSSYGRAIADYRAPQRPSTQWASRARFRPRRLSGLRR.

Histidine 26 is a 1D-myo-inositol 3-phosphate binding site. UDP-N-acetyl-alpha-D-glucosamine is bound by residues 32-33 (QP) and glycine 40. 1D-myo-inositol 3-phosphate-binding positions include 37–42 (DAGGMN), lysine 95, tyrosine 128, threonine 152, and arginine 172. Arginine 246, lysine 251, and glutamine 304 together coordinate UDP-N-acetyl-alpha-D-glucosamine. Residues tyrosine 313, arginine 314, and alanine 316 each coordinate Mg(2+). UDP-N-acetyl-alpha-D-glucosamine-binding residues include glutamate 326 and glutamate 334. Threonine 340 contributes to the Mg(2+) binding site.

It belongs to the glycosyltransferase group 1 family. MshA subfamily. In terms of assembly, homodimer.

The enzyme catalyses 1D-myo-inositol 3-phosphate + UDP-N-acetyl-alpha-D-glucosamine = 1D-myo-inositol 2-acetamido-2-deoxy-alpha-D-glucopyranoside 3-phosphate + UDP + H(+). In terms of biological role, catalyzes the transfer of a N-acetyl-glucosamine moiety to 1D-myo-inositol 3-phosphate to produce 1D-myo-inositol 2-acetamido-2-deoxy-glucopyranoside 3-phosphate in the mycothiol biosynthesis pathway. In Mycobacteroides abscessus (strain ATCC 19977 / DSM 44196 / CCUG 20993 / CIP 104536 / JCM 13569 / NCTC 13031 / TMC 1543 / L948) (Mycobacterium abscessus), this protein is D-inositol 3-phosphate glycosyltransferase.